The sequence spans 351 residues: AA9 family lytic polysaccharide monooxygenase A (351 aa).

Cu(2+) is bound at residue His1. Cysteines 52 and 178 form a disulfide. N-linked (GlcNAc...) asparagine glycosylation occurs at Asn53. His86 is a binding site for Cu(2+). The N-linked (GlcNAc...) asparagine glycan is linked to Asn138. Residues His164 and Gln173 each coordinate O2. Residue Tyr175 participates in Cu(2+) binding. Residue Ser280 is the site of GPI-anchor amidated serine attachment. Positions 281–351 (SAIGTSTASS…RSGTLGRLSF (71 aa)) are cleaved as a propeptide — removed in mature form.

Belongs to the polysaccharide monooxygenase AA9 family. The cofactor is Cu(2+).

The protein localises to the cell membrane. The catalysed reaction is [(1-&gt;4)-beta-D-glucosyl]n+m + reduced acceptor + O2 = 4-dehydro-beta-D-glucosyl-[(1-&gt;4)-beta-D-glucosyl]n-1 + [(1-&gt;4)-beta-D-glucosyl]m + acceptor + H2O.. Its function is as follows. Lytic polysaccharide monooxygenase (LPMO) that depolymerizes crystalline and amorphous polysaccharides via the oxidation of scissile alpha- or beta-(1-4)-glycosidic bonds, yielding C1 or C4 oxidation products. Catalysis by LPMOs requires the reduction of the active-site copper from Cu(II) to Cu(I) by a reducing agent and H(2)O(2) or O(2) as a cosubstrate. Functionally, has broad specificity, cleaving at any position along the beta-glucan backbone of xyloglucan, regardless of substitutions. Shows minor activity on glucomannan. This is AA9 family lytic polysaccharide monooxygenase A from Gloeophyllum trabeum (Brown rot fungus).